The chain runs to 418 residues: Putative ion-transport protein YfeO (418 aa).

Helical transmembrane passes span 10-30 (LLLSLPAVAIGIASSLILIVV), 54-74 (DSPLWIIGVLTLTGIAVGLVI), 99-119 (ALPGLIVALILGLAGGVSLGP), 120-140 (EHPIMTVNIALAVAIGARLLP), 149-169 (ILASAGTIGALFGTPVAAALI), 186-206 (LFAPLMAAAAGALTTGLFFHP), 223-243 (ILSGAIVAAIAIAAGMVAVWC), 258-278 (VLVLGIGGFILGILGVIGGPV), 300-320 (DYFLLAVIKLAALVVAAASGF), 322-342 (GGRIFPAVFVGVALGLMLHEH), 343-363 (VPAVPAAITVSCAILGIVLVV), and 371-391 (LFMAAVVVPNTTLLPLLCIVM).

It belongs to the chloride channel (TC 2.A.49) family.

It localises to the cell membrane. The chain is Putative ion-transport protein YfeO from Escherichia coli O9:H4 (strain HS).